The chain runs to 313 residues: Olfactory receptor 5H15 (313 aa).

At 1 to 28 (MEEENATLLTEFVLTGFLYQPQWKIPLF) the chain is on the extracellular side. N-linked (GlcNAc...) asparagine glycosylation is present at N5. A helical transmembrane segment spans residues 29 to 49 (LAFLVIYLITIMGNLGLIAVI). Over 50–56 (WKDPHLH) the chain is Cytoplasmic. Residues 57–77 (IPMYLLLGNLAFVDAWISSTV) form a helical membrane-spanning segment. Residues 78–98 (TPKMLNNFLAKSKMISLSECK) lie on the Extracellular side of the membrane. C97 and C179 are joined by a disulfide. A helical transmembrane segment spans residues 99 to 119 (IQFFSIAIGVTTECFLLATMA). At 120-143 (YDRYVAICKPLLYPAIMTNGLCIR) the chain is on the cytoplasmic side. The chain crosses the membrane as a helical span at residues 144–164 (LLILSYIAGILHALIHEGFLF). At 165 to 195 (RLTFCNSNIVHHIYCDTIPLSKISCTDSSIN) the chain is on the extracellular side. The chain crosses the membrane as a helical span at residues 196–216 (FLMVFIFSGSIQVFSIVTILI). Topologically, residues 217–240 (SYTFVLFTVLEKKSDKGVRKAFST) are cytoplasmic. Residues 241–261 (CGAHLFSVCLYYGPLLLMYVG) traverse the membrane as a helical segment. Residues 262 to 271 (PASPQADGQN) are Extracellular-facing. The chain crosses the membrane as a helical span at residues 272-292 (MVEPLFYTVIIPLLNPIIYSL). Residues 293 to 313 (RNKQVIVSFIKMLKRNVKVSY) lie on the Cytoplasmic side of the membrane.

Belongs to the G-protein coupled receptor 1 family.

The protein resides in the cell membrane. Odorant receptor. This Homo sapiens (Human) protein is Olfactory receptor 5H15 (OR5H15).